A 525-amino-acid chain; its full sequence is MRQDLFLDLLLLQLLWEAPVVSSGPGKELSVVWAQEGAPVHLPCSLEFPHLDPNFLRRGWVTWQHRPDSDQPASIPALDLLQGMPSTRRHPPHRYTVLSVAPGGLRSGRQPLLSHVQLEKRGPQRGDFSLWLRPATRKDAGEYHAFVRLPDRDFSCSLRLRVGQASMIASPPGTLKPSDWVILNCSFSRPDRPVSVHWFQGQSRVPVHNSPRHYLAESFLLLPQVSPLDSGTWGCVLTYRDGFNVSITYNLKVQGLEPVAPLTVYAAEGSRVELPCHLPPVVGTPSLLIAKWTPPGGGPELPVTGKSGNFTLQLENVGRAQAGTYTCSIHLQGRQLSAAVTLAVITVTPKSFGLPGSPQKLLCEVVPASGEGRFVWRPLSDLSRSSLGPVLELQEAKLLAEQWQCQLYEGQKLLGATVYTAESSSGAWSAKRISGDLKGGHLFLSLILGALALFLLVTGAFGFHLWRRQLLRRRFSALEHGIRPPPVQSKIEELEREPETEMEPETEPDPEPQPEPELEPESRQL.

Residues M1 to S23 form the signal peptide. The Extracellular segment spans residues G24–L442. The Ig-like V-type domain occupies G37–G163. Residues G37–S246 form an interaction with FGL1 region. C44 and C156 are disulfide-bonded. 3 Ig-like C2-type domains span residues Q164–S246, P258–T341, and I345–K412. N-linked (GlcNAc...) asparagine glycosylation occurs at N184. A disulfide bridge links C185 with C235. N-linked (GlcNAc...) asparagine glycans are attached at residues N244 and N309. 2 disulfide bridges follow: C276-C327 and C363-C405. Positions E422–L442 are connecting peptide. The chain crosses the membrane as a helical span at residues F443–F463. At H464–L525 the chain is on the cytoplasmic side. The segment at P486–L525 is disordered. A KIEELE motif motif is present at residues K490–E495. Over residues K490–E499 the composition is skewed to basic and acidic residues. The segment at E493–S522 is 15 X 2 AA tandem repeats of E-X. A compositionally biased stretch (acidic residues) spans T500–E519.

Belongs to the LAG3 family. As to quaternary structure, interacts with MHC class II (MHC-II); selectively recognizes stable complexes of peptide and MHC-II. Interacts with FGL1 (via the Fibrinogen C-terminal domain). Post-translationally, proteolytically cleaved by ADAM10 and ADAM17 within the connecting peptide region, leading to release of Secreted lymphocyte activation gene 3 protein (sLAG-3). ADAM10 mediates constitutive cleavage, but cleavage increases following T-cell activation, whereas shedding by ADAM17 is induced by TCR signaling in a PRKCQ-dependent manner.

It is found in the cell membrane. The protein localises to the secreted. Functionally, lymphocyte activation gene 3 protein: Inhibitory receptor on antigen activated T-cells. Delivers inhibitory signals upon binding to ligands, such as FGL1. FGL1 constitutes a major ligand of LAG3 and is responsible for LAG3 T-cell inhibitory function. Following TCR engagement, LAG3 associates with CD3-TCR in the immunological synapse and directly inhibits T-cell activation. May inhibit antigen-specific T-cell activation in synergy with PDCD1/PD-1, possibly by acting as a coreceptor for PDCD1/PD-1. Negatively regulates the proliferation, activation, effector function and homeostasis of both CD8(+) and CD4(+) T-cells. Also mediates immune tolerance: constitutively expressed on a subset of regulatory T-cells (Tregs) and contributes to their suppressive function. Also acts as a negative regulator of plasmacytoid dendritic cell (pDCs) activation. Binds MHC class II (MHC-II); the precise role of MHC-II-binding is however unclear. May function as a ligand for MHC class II (MHC-II) on antigen-presenting cells (APC), promoting APC activation/maturation and driving Th1 immune response. The sequence is that of Lymphocyte activation gene 3 protein (Lag3) from Rattus norvegicus (Rat).